The sequence spans 206 residues: GCN5-like protein acetyltransferase Rv2170 (206 aa).

Positions 44 to 205 (EHIRRRGWQA…AFAILGRTLP (162 aa)) constitute an N-acetyltransferase domain. The active-site Proton donor is Tyr-176.

Belongs to the acetyltransferase family.

The enzyme catalyses L-lysyl-[protein] + acetyl-CoA = N(6)-acetyl-L-lysyl-[protein] + CoA + H(+). It catalyses the reaction propanoyl-CoA + L-lysyl-[protein] = N(6)-propanoyl-L-lysyl-[protein] + CoA + H(+). The catalysed reaction is succinyl-CoA + L-lysyl-[protein] = N(6)-succinyl-L-lysyl-[protein] + CoA + H(+). Acetyltransferase involved in the post-translational regulation of the central metabolic enzyme isocitrate dehydrogenase 1 (ICDH-1) through lysine acetylation. Catalyzes the acetylation of ICDH-1 at Lys-30 and Lys-129, using acetyl-CoA as a donor, leading to a reduction of ICDH-1 enzyme activity. Can also use propionyl-CoA and succinyl-CoA as donors. Cannot act on the isocitrate dehydrogenase 2 (ICDH-2). Might play a role in regulating the TCA cycle and methylcitrate cycle when M.tuberculosis utilizes fatty acid as carbon source. Its function is as follows. In addition, it can acetylate the amino group of isoniazid (INH), one of the first-line drugs used for the treatment of tuberculosis, thereby canceling out the drug toxicity. Acts by catalyzing the transfer of an acetyl group from acetyl-CoA to INH. Following acetylation, INH is broken down into isonicotinic acid and acetylhydrazine. M.smegmatis and M.tuberculosis H37Ra strains overexpressing Rv2170 are resistant to INH. Has little or no acetyltransferase activity with other antibiotics such as streptomycin, neomycin, kanamycin, amikacin, apramycin and gentamicin. This is GCN5-like protein acetyltransferase Rv2170 from Mycobacterium tuberculosis (strain ATCC 25618 / H37Rv).